A 558-amino-acid polypeptide reads, in one-letter code: Deleted in azoospermia protein 2 (558 aa).

Over residues 1-10 (MSAANPETPN) the composition is skewed to polar residues. Positions 1-27 (MSAANPETPNSTISREASTQSSSAAAS) are disordered. Over residues 11–27 (STISREASTQSSSAAAS) the composition is skewed to low complexity. The region spanning 40-115 (NTVFVGGIDA…KKLKLGPAIR (76 aa)) is the RRM domain. DAZ domains follow at residues 167–190 (AYSA…YNYQ), 191–214 (EYPT…YNYQ), 215–238 (PFPA…YNYQ), 239–262 (AFPA…YNYQ), 263–286 (PFPA…YNYQ), 287–310 (AFPA…YNYQ), 311–334 (AFPA…YNYQ), 335–358 (AFPA…YNYQ), 359–382 (AFPA…YNYQ), 383–406 (AFPA…YNYQ), 407–430 (AFPA…YNYQ), 431–454 (AFPA…YNYQ), 455–478 (AFPA…YNYQ), 479–502 (AFPA…YNYQ), and 503–526 (AFPA…YNYQ).

Belongs to the RRM DAZ family. In terms of assembly, forms a heterodimer with BOLL and DAZL. Interacts with PUM2, DAZAP1, DAZAP2, DZIP1 and DZIP3. In terms of tissue distribution, testis specific.

The protein localises to the cytoplasm. It localises to the nucleus. Its function is as follows. RNA-binding protein that plays an essential role in spermatogenesis. May act by binding to the 3'-UTR of mRNAs and regulating their translation. This chain is Deleted in azoospermia protein 2 (DAZ2), found in Homo sapiens (Human).